The primary structure comprises 204 residues: Proteasome subunit beta 1 (204 aa).

Positions M1–A9 are cleaved as a propeptide — removed in mature form; by autocatalysis. T10 acts as the Nucleophile in catalysis.

The protein belongs to the peptidase T1B family. The 20S proteasome core is composed of 14 alpha and 14 beta subunits that assemble into four stacked heptameric rings, resulting in a barrel-shaped structure. The two inner rings, each composed of seven catalytic beta subunits, are sandwiched by two outer rings, each composed of seven alpha subunits. The catalytic chamber with the active sites is on the inside of the barrel. Has a gated structure, the ends of the cylinder being occluded by the N-termini of the alpha-subunits. Is capped at one or both ends by the proteasome regulatory ATPase, PAN.

The protein localises to the cytoplasm. It catalyses the reaction Cleavage of peptide bonds with very broad specificity.. The formation of the proteasomal ATPase PAN-20S proteasome complex, via the docking of the C-termini of PAN into the intersubunit pockets in the alpha-rings, triggers opening of the gate for substrate entry. Interconversion between the open-gate and close-gate conformations leads to a dynamic regulation of the 20S proteasome proteolysis activity. Component of the proteasome core, a large protease complex with broad specificity involved in protein degradation. This Hyperthermus butylicus (strain DSM 5456 / JCM 9403 / PLM1-5) protein is Proteasome subunit beta 1.